A 340-amino-acid polypeptide reads, in one-letter code: Entry-fusion complex protein OPG094 (340 aa).

The interval 1 to 20 (MGGGVSVELPKRDPPPGVPT) is disordered. Glycine 2 is lipidated: N-myristoyl glycine; by host. The Virion surface portion of the chain corresponds to 2–319 (GGGVSVELPK…VQHNIKHSFD (318 aa)). The helical; Signal-anchor for type II membrane protein transmembrane segment at 320 to 340 (LKLHLISLLSLLVIWILIVAI) threads the bilayer.

The protein belongs to the orthopoxvirus OPG086 family. In terms of assembly, interacts with OPG143. Component of the entry fusion complex (EFC) composed of OPG053, OPG076, OPG086, OPG094, OPG095, OPG099, OPG107, OPG143, OPG104, OPG147 and OPG155. Except for OPG095 and OPG053, each of the EFC proteins is required for assembly or stability of the complex. In terms of processing, unglycosylated because produced in viral factories instead of the classic ER -Golgi route.

The protein localises to the virion membrane. In terms of biological role, component of the entry fusion complex (EFC), which consists of 11 proteins. During cell infection, this complex mediates entry of the virion core into the host cytoplasm by a two-step mechanism consisting of lipid mixing of the viral and cellular membranes and subsequent pore formation. In Cynomys gunnisoni (Gunnison's prairie dog), this protein is Entry-fusion complex protein OPG094 (OPG094).